The primary structure comprises 251 residues: 1-(5-phosphoribosyl)-5-[(5-phosphoribosylamino)methylideneamino] imidazole-4-carboxamide isomerase (251 aa).

D8 (proton acceptor) is an active-site residue. D131 (proton donor) is an active-site residue.

This sequence belongs to the HisA/HisF family.

The protein localises to the cytoplasm. The catalysed reaction is 1-(5-phospho-beta-D-ribosyl)-5-[(5-phospho-beta-D-ribosylamino)methylideneamino]imidazole-4-carboxamide = 5-[(5-phospho-1-deoxy-D-ribulos-1-ylimino)methylamino]-1-(5-phospho-beta-D-ribosyl)imidazole-4-carboxamide. It participates in amino-acid biosynthesis; L-histidine biosynthesis; L-histidine from 5-phospho-alpha-D-ribose 1-diphosphate: step 4/9. The polypeptide is 1-(5-phosphoribosyl)-5-[(5-phosphoribosylamino)methylideneamino] imidazole-4-carboxamide isomerase (Thiobacillus denitrificans (strain ATCC 25259 / T1)).